The chain runs to 215 residues: uncharacterized protein (215 aa).

Active-site charge relay system residues include Ser114, Asp162, and His194.

This sequence belongs to the AB hydrolase superfamily. AB hydrolase 2 family.

This is an uncharacterized protein from Rickettsia prowazekii (strain Madrid E).